The primary structure comprises 166 residues: Small ribosomal subunit protein uS5 (166 aa).

Residues 11–74 (LQEKLIAVNR…EKARRNMINV (64 aa)) form the S5 DRBM domain.

It belongs to the universal ribosomal protein uS5 family. As to quaternary structure, part of the 30S ribosomal subunit. Contacts proteins S4 and S8.

Its function is as follows. With S4 and S12 plays an important role in translational accuracy. Located at the back of the 30S subunit body where it stabilizes the conformation of the head with respect to the body. This is Small ribosomal subunit protein uS5 from Actinobacillus pleuropneumoniae serotype 5b (strain L20).